A 510-amino-acid chain; its full sequence is NAD(P)H-quinone oxidoreductase subunit 2 B, chloroplastic (510 aa).

13 helical membrane-spanning segments follow: residues Leu24–Leu44, Ile57–Phe77, Ile99–Ile119, Met124–Cys144, Leu149–Tyr169, Tyr183–Gly203, Pro227–Ala247, Trp295–Ile315, Met323–Asp343, Gly347–Ala367, Ala395–Phe415, Leu418–Leu438, and Leu482–Ile502.

Belongs to the complex I subunit 2 family. As to quaternary structure, NDH is composed of at least 16 different subunits, 5 of which are encoded in the nucleus.

It localises to the plastid. Its subcellular location is the chloroplast thylakoid membrane. It catalyses the reaction a plastoquinone + NADH + (n+1) H(+)(in) = a plastoquinol + NAD(+) + n H(+)(out). The enzyme catalyses a plastoquinone + NADPH + (n+1) H(+)(in) = a plastoquinol + NADP(+) + n H(+)(out). Functionally, NDH shuttles electrons from NAD(P)H:plastoquinone, via FMN and iron-sulfur (Fe-S) centers, to quinones in the photosynthetic chain and possibly in a chloroplast respiratory chain. The immediate electron acceptor for the enzyme in this species is believed to be plastoquinone. Couples the redox reaction to proton translocation, and thus conserves the redox energy in a proton gradient. This is NAD(P)H-quinone oxidoreductase subunit 2 B, chloroplastic from Cucumis sativus (Cucumber).